The following is a 99-amino-acid chain: Putative RNA-binding protein RbpE (99 aa).

In terms of domain architecture, RRM spans 2–79; it reads SIYVGNLSYS…RVLKVNKARP (78 aa). Residues 78–99 are disordered; that stretch reads RPREEKGARSGGGSWSRNNGGY. Gly residues predominate over residues 86–99; the sequence is RSGGGSWSRNNGGY.

The polypeptide is Putative RNA-binding protein RbpE (rbpE) (Nostoc sp. (strain PCC 7120 / SAG 25.82 / UTEX 2576)).